Reading from the N-terminus, the 250-residue chain is Ubiquinone/menaquinone biosynthesis C-methyltransferase UbiE (250 aa).

S-adenosyl-L-methionine-binding positions include threonine 73, aspartate 94, 122–123, and serine 139; that span reads NA.

The protein belongs to the class I-like SAM-binding methyltransferase superfamily. MenG/UbiE family.

The enzyme catalyses a 2-demethylmenaquinol + S-adenosyl-L-methionine = a menaquinol + S-adenosyl-L-homocysteine + H(+). It carries out the reaction a 2-methoxy-6-(all-trans-polyprenyl)benzene-1,4-diol + S-adenosyl-L-methionine = a 5-methoxy-2-methyl-3-(all-trans-polyprenyl)benzene-1,4-diol + S-adenosyl-L-homocysteine + H(+). It functions in the pathway quinol/quinone metabolism; menaquinone biosynthesis; menaquinol from 1,4-dihydroxy-2-naphthoate: step 2/2. It participates in cofactor biosynthesis; ubiquinone biosynthesis. In terms of biological role, methyltransferase required for the conversion of demethylmenaquinol (DMKH2) to menaquinol (MKH2) and the conversion of 2-polyprenyl-6-methoxy-1,4-benzoquinol (DDMQH2) to 2-polyprenyl-3-methyl-6-methoxy-1,4-benzoquinol (DMQH2). In Francisella tularensis subsp. holarctica (strain FTNF002-00 / FTA), this protein is Ubiquinone/menaquinone biosynthesis C-methyltransferase UbiE.